Here is a 99-residue protein sequence, read N- to C-terminus: Duplicate procyclin (99 aa).

This Trypanosoma brucei brucei protein is Duplicate procyclin.